Here is an 844-residue protein sequence, read N- to C-terminus: NADPH-Fe(3+) oxidoreductase subunit alpha (844 aa).

A 2Fe-2S ferredoxin-type domain is found at 1–78; the sequence is MVSLTIDGKD…GIKVTTQSEK (78 aa). [2Fe-2S] cluster is bound by residues Cys-34, Cys-45, Cys-48, and Cys-62. Positions 78-117 constitute a 4Fe-4S His(Cys)3-ligated-type domain; it reads KLSRIRQKIMELMLVNHPLDCPVCDAGGECDLQNACYGLG. [4Fe-4S] cluster is bound by residues His-94, Cys-98, Cys-101, Cys-107, Cys-146, Cys-149, Cys-152, Cys-186, Cys-189, Cys-192, Cys-196, Cys-222, Cys-225, Cys-229, and Cys-256. 4Fe-4S ferredoxin-type domains are found at residues 137-168 and 177-206; these read PLIE…IRVV and DTVD…SKPF. In terms of domain architecture, 4Fe-4S Mo/W bis-MGD-type spans 215-270; that stretch reads FTTTPSVCPFCATGCQIEYHSRNGRVERVTSDDSTYNSGNLCINGRFGYSYINSPD.

As to quaternary structure, heterotetramer with 2 beta subunits. [4Fe-4S] cluster serves as cofactor.

The protein resides in the cell inner membrane. With respect to regulation, not regulated by FAD or FMN. In terms of biological role, the SfrAB enzymatic complex is probably involved in acetate metabolism and does not participate directly in the reduction of Fe(3+) chelates. May serve as a major route for NADP regeneration. This Geobacter sulfurreducens (strain DL-1 / KN400) protein is NADPH-Fe(3+) oxidoreductase subunit alpha (sfrA).